The sequence spans 742 residues: Kanadaptin (742 aa).

Residues 1–16 show a composition bias toward polar residues; the sequence is MADILSQSETLASQDL. The disordered stretch occupies residues 1-112; that stretch reads MADILSQSET…PPWGGPATAP (112 aa). The segment covering 27–43 has biased composition (low complexity); that stretch reads VSPAARSKAPASSSSNP. S28 is subject to Phosphoserine. Residues 72–82 are compositionally biased toward basic and acidic residues; the sequence is GDFRSLQEEQS. S90 carries the post-translational modification Phosphoserine. Residues 96 to 106 show a composition bias toward pro residues; sequence RAPPYQEPPWG. The 61-residue stretch at 135 to 195 folds into the FHA domain; that stretch reads CLFGRLSGCD…HGTFLNKTRI (61 aa). Residues 254–282 form a disordered region; it reads LGEDSDEEEEMDTSERKINAGSQDDEMGC. Residues 256-265 are compositionally biased toward acidic residues; it reads EDSDEEEEMD. 2 positions are modified to phosphoserine: S258 and S412. K441 participates in a covalent cross-link: Glycyl lysine isopeptide (Lys-Gly) (interchain with G-Cter in SUMO2). Positions 443–476 form a coiled coil; the sequence is ETFESLVAKLNDAERELSEISERLKASSQVLSES. Residue S476 is modified to Phosphoserine. The interval 565–742 is disordered; sequence LKTGTVGKLP…RTHLNDKYGY (178 aa). Residues 591–606 show a composition bias toward acidic residues; the sequence is PEVEEEEEEEEEEEKE. Over residues 607–619 the composition is skewed to basic and acidic residues; that stretch reads KEEHEKKKLEDGS. Phosphoserine is present on residues S655 and S658. Residues 699–708 are compositionally biased toward low complexity; sequence PGPGKLPPTL. Basic and acidic residues predominate over residues 732–742; sequence GRTHLNDKYGY.

Ubiquitously expressed.

The protein localises to the nucleus. The protein resides in the cytoplasm. This Homo sapiens (Human) protein is Kanadaptin (SLC4A1AP).